The primary structure comprises 803 residues: Leucine--tRNA ligase (803 aa).

The short motif at 40–51 (PYPSGAGLHVGH) is the 'HIGH' region element. The 'KMSKS' region signature appears at 575–579 (KMSKS). K578 contacts ATP.

Belongs to the class-I aminoacyl-tRNA synthetase family.

It is found in the cytoplasm. The catalysed reaction is tRNA(Leu) + L-leucine + ATP = L-leucyl-tRNA(Leu) + AMP + diphosphate. In Listeria innocua serovar 6a (strain ATCC BAA-680 / CLIP 11262), this protein is Leucine--tRNA ligase.